Reading from the N-terminus, the 420-residue chain is MAELGKKYCVYCLAEVSPLRFRCTECQDIELCPECFSAGAEIGHHRRYHGYQLVDGGRFTLWGPEAEGGWTSREEQLLLDAIEQFGFGNWEDMAAHVGASRTPQEVMEHYVSMYIHGNLGKACIPDTIPNRVTDHTCPSGGPLSPSLTTPLPPLDISVAEQQQLGYMPLRDDYEIEYDQDAETLISGLSVNYDDDDVEIELKRAHVDMYVRKLKERQRRKNIARDYNLVPAFLGKDKKEKEKALKRKITKEEKELRLKLRPLYQFMSCKEFDDLFENMHKEKMLRAKIRELQRYRRNGITKMEESAEYEAARHKREKRKENKNLAGSKRGKEDGKDSEFAAIENLPGFELLSDREKVLCSSLNLSPARYVTVKTIIIKDHLQKRQGIPSKSRLPSYLDKVLKKRILNFLTESGWISRDAS.

The ZZ-type zinc finger occupies 4–59 (LGKKYCVYCLAEVSPLRFRCTECQDIELCPECFSAGAEIGHHRRYHGYQLVDGGRF). Residues Cys9, Cys12, Cys23, Cys26, Cys32, Cys35, His45, and His49 each coordinate Zn(2+). One can recognise an SANT domain in the interval 65–118 (EAEGGWTSREEQLLLDAIEQFGFGNWEDMAAHVGASRTPQEVMEHYVSMYIHGN). Residues 305–335 (SAEYEAARHKREKRKENKNLAGSKRGKEDGK) form a disordered region.

In terms of assembly, interacts with GCN5L2, SMARCA4, SMARCE1 and PAX5. Component of the TFTC-HAT complex.

The protein localises to the nucleus. Functionally, coactivates PAX5-dependent transcription together with either SMARCA4 or GCN5L2. The chain is Transcriptional adapter 2-beta (TADA2B) from Homo sapiens (Human).